Reading from the N-terminus, the 419-residue chain is Probable sodium/metabolite cotransporter BASS2, chloroplastic (419 aa).

Residues 1–45 constitute a chloroplast transit peptide; the sequence is MAASTTCPARSMASVSRALRPRPHAAIASAAVRTAARLGGGLGIV. Transmembrane regions (helical) follow at residues 106-126, 137-157, 170-190, 194-214, 225-245, 259-279, 291-311, 323-343, and 384-404; these read IVELLTTLFPVWVILGTIIGI, TDLFTVGLGFLMLSMGLTLTF, VGVGFLAQYLIKPMLGFAIAM, LSAPLATGLILVSCCPGGQAS, VALSVLMTTCSTIGAIVMTPL, AAGLAISTFQVVLLPTIVGVL, IISITPLIGVLLTTLLCASPI, GQLIIPVALLHVAAFALGYWL, and VPSAVSVVCMALGGSALAVFW.

The protein belongs to the bile acid:sodium symporter (BASS) (TC 2.A.28) family.

The protein resides in the membrane. The protein localises to the plastid. Its subcellular location is the chloroplast envelope. Functionally, may function as sodium-coupled metabolite transporter across the chloroplast envelope. This chain is Probable sodium/metabolite cotransporter BASS2, chloroplastic (BASS2), found in Oryza sativa subsp. japonica (Rice).